The sequence spans 171 residues: UPF0303 protein YPN_2129 (171 aa).

Belongs to the UPF0303 family.

This Yersinia pestis bv. Antiqua (strain Nepal516) protein is UPF0303 protein YPN_2129.